A 123-amino-acid polypeptide reads, in one-letter code: Large ribosomal subunit protein uL24 (123 aa).

It belongs to the universal ribosomal protein uL24 family. As to quaternary structure, part of the 50S ribosomal subunit.

One of two assembly initiator proteins, it binds directly to the 5'-end of the 23S rRNA, where it nucleates assembly of the 50S subunit. Functionally, located at the polypeptide exit tunnel on the outside of the subunit. The protein is Large ribosomal subunit protein uL24 of Pyrobaculum islandicum (strain DSM 4184 / JCM 9189 / GEO3).